The sequence spans 146 residues: Endoribonuclease YbeY (146 aa).

Zn(2+)-binding residues include H108, H112, and H118.

This sequence belongs to the endoribonuclease YbeY family. Zn(2+) serves as cofactor.

It localises to the cytoplasm. In terms of biological role, single strand-specific metallo-endoribonuclease involved in late-stage 70S ribosome quality control and in maturation of the 3' terminus of the 16S rRNA. In Onion yellows phytoplasma (strain OY-M), this protein is Endoribonuclease YbeY.